Reading from the N-terminus, the 361-residue chain is MSIDQRLQLITRNAAEIITIDELRKKIESEEKLKGYIGFEPSGLFHIGWLIWTQKVKDLVEAGVNMTLLRATWHAWINDKLGGDLSLIKMAADYTVEVIKNYGVDTTKLNIVDADDMVKEKDYWALVIKVAKNASLARIKRALTIMGRRAEEAEIDASKLIYPAMQVSDIFYLDLDIALGGTDQRKAHMLARDVAEKMGKKKIVSIHTPLLVGLQGGQRMSITEGMEEDDIQAEIKMSKSKPESAIFVSDSREDVERKIMGAYCPKGVAENNPILQILKYIIFPRYNFVKIERDIRYGGDVEFKDYEELERAYIEGKIHPMDLKKATARRLNEILEPIRKSLERKPEFEEMIQKISKSVTR.

5 residues coordinate L-tyrosine: Tyr36, Tyr162, Gln166, Asp169, and Gln184. The 'KMSKS' region signature appears at 236–240 (KMSKS). Lys239 lines the ATP pocket.

The protein belongs to the class-I aminoacyl-tRNA synthetase family. TyrS type 4 subfamily. Homodimer.

The protein localises to the cytoplasm. The enzyme catalyses tRNA(Tyr) + L-tyrosine + ATP = L-tyrosyl-tRNA(Tyr) + AMP + diphosphate + H(+). Functionally, catalyzes the attachment of tyrosine to tRNA(Tyr) in a two-step reaction: tyrosine is first activated by ATP to form Tyr-AMP and then transferred to the acceptor end of tRNA(Tyr). The chain is Tyrosine--tRNA ligase from Saccharolobus islandicus (strain Y.N.15.51 / Yellowstone #2) (Sulfolobus islandicus).